The primary structure comprises 20 residues: Cuticle-degrading protease-like protein (20 aa).

The interval 1-20 (AIVEQQGAPXGLGRIINKXK) is disordered.

It belongs to the peptidase S8 family.

It localises to the secreted. Functionally, capable of breaching the insect cuticle. The sequence is that of Cuticle-degrading protease-like protein from Metacordyceps chlamydosporia (Nematophagous fungus).